We begin with the raw amino-acid sequence, 362 residues long: Serpentine receptor class delta-2 (362 aa).

Helical transmembrane passes span 27–47, 57–77, 104–124, 144–164, 209–229, 264–284, and 292–312; these read LSCL…YLIW, YAIY…ISFF, FCYF…WILL, LIRN…VYVF, LISI…ILYF, GIPI…FGII, and ITFR…IIFV.

The protein belongs to the nematode receptor-like protein srd family.

Its subcellular location is the membrane. In terms of biological role, thought to be a chemosensory receptor. In Caenorhabditis elegans, this protein is Serpentine receptor class delta-2 (srd-2).